The primary structure comprises 174 residues: Large ribosomal subunit protein uL10 (174 aa).

This sequence belongs to the universal ribosomal protein uL10 family. Part of the ribosomal stalk of the 50S ribosomal subunit. The N-terminus interacts with L11 and the large rRNA to form the base of the stalk. The C-terminus forms an elongated spine to which L12 dimers bind in a sequential fashion forming a multimeric L10(L12)X complex.

In terms of biological role, forms part of the ribosomal stalk, playing a central role in the interaction of the ribosome with GTP-bound translation factors. The protein is Large ribosomal subunit protein uL10 of Synechococcus sp. (strain RCC307).